Reading from the N-terminus, the 100-residue chain is NAD(P)H-quinone oxidoreductase subunit 4L, chloroplastic (100 aa).

The next 3 membrane-spanning stretches (helical) occupy residues 1–21, 31–51, and 60–80; these read MLEHVLIISAYLFSIGIYGLI, MCLELILNAVNMNFVTFSDFF, and IFSIFVIAIAAAEAAIGPAIL.

Belongs to the complex I subunit 4L family. NDH is composed of at least 16 different subunits, 5 of which are encoded in the nucleus.

The protein localises to the plastid. It is found in the chloroplast thylakoid membrane. The enzyme catalyses a plastoquinone + NADH + (n+1) H(+)(in) = a plastoquinol + NAD(+) + n H(+)(out). It catalyses the reaction a plastoquinone + NADPH + (n+1) H(+)(in) = a plastoquinol + NADP(+) + n H(+)(out). Its function is as follows. NDH shuttles electrons from NAD(P)H:plastoquinone, via FMN and iron-sulfur (Fe-S) centers, to quinones in the photosynthetic chain and possibly in a chloroplast respiratory chain. The immediate electron acceptor for the enzyme in this species is believed to be plastoquinone. Couples the redox reaction to proton translocation, and thus conserves the redox energy in a proton gradient. This is NAD(P)H-quinone oxidoreductase subunit 4L, chloroplastic from Cucumis sativus (Cucumber).